The following is a 424-amino-acid chain: Tyrosine--tRNA ligase (424 aa).

Tyr-37 serves as a coordination point for L-tyrosine. The short motif at 42–51 is the 'HIGH' region element; the sequence is PTADSLHLGH. Lys-144 carries the N6-acetyllysine modification. The L-tyrosine site is built by Tyr-175 and Gln-179. Positions 235-239 match the 'KMSKS' region motif; the sequence is KFGKT. Lys-238 contacts ATP. An S4 RNA-binding domain is found at 357–414; that stretch reads ADLMQALVDSELQPSRGQARKTIASNAITINGEKQSDPEYFFKEEDRLFGRFTLLRRG.

The protein belongs to the class-I aminoacyl-tRNA synthetase family. TyrS type 1 subfamily. In terms of assembly, homodimer.

The protein localises to the cytoplasm. It catalyses the reaction tRNA(Tyr) + L-tyrosine + ATP = L-tyrosyl-tRNA(Tyr) + AMP + diphosphate + H(+). Catalyzes the attachment of tyrosine to tRNA(Tyr) in a two-step reaction: tyrosine is first activated by ATP to form Tyr-AMP and then transferred to the acceptor end of tRNA(Tyr). The polypeptide is Tyrosine--tRNA ligase (Escherichia coli O8 (strain IAI1)).